The chain runs to 1044 residues: Probable translation initiation factor IF-2 (1044 aa).

In terms of domain architecture, DOD-type homing endonuclease spans 173 to 265; sequence FAGTIFGREN…LSLILLRLGI (93 aa). Residues 451–668 enclose the tr-type G domain; the sequence is TTETHNFIAN…LIAGLSQKYL (218 aa). GTP is bound by residues 524–528 and 578–581; these read DTPGH and NKID.

It belongs to the TRAFAC class translation factor GTPase superfamily. Classic translation factor GTPase family. IF-2 subfamily. Post-translationally, this protein undergoes a protein self splicing that involves a post-translational excision of the intervening region (intein) followed by peptide ligation.

In terms of biological role, function in general translation initiation by promoting the binding of the formylmethionine-tRNA to ribosomes. Seems to function along with eIF-2. This is Probable translation initiation factor IF-2 (infB) from Pyrococcus horikoshii (strain ATCC 700860 / DSM 12428 / JCM 9974 / NBRC 100139 / OT-3).